We begin with the raw amino-acid sequence, 70 residues long: Sec-independent protein translocase protein TatA (70 aa).

Residues Met-1–Gly-21 form a helical membrane-spanning segment. The span at Phe-50 to Pro-62 shows a compositional bias: basic and acidic residues. The tract at residues Phe-50–Ser-70 is disordered.

Belongs to the TatA/E family. In terms of assembly, forms a complex with TatC.

The protein localises to the cell inner membrane. In terms of biological role, part of the twin-arginine translocation (Tat) system that transports large folded proteins containing a characteristic twin-arginine motif in their signal peptide across membranes. TatA could form the protein-conducting channel of the Tat system. This Chlorobium limicola (strain DSM 245 / NBRC 103803 / 6330) protein is Sec-independent protein translocase protein TatA.